We begin with the raw amino-acid sequence, 230 residues long: Thiamine-triphosphatase (230 aa).

Alanine 2 bears the N-acetylalanine mark. One can recognise a CYTH domain in the interval 5-201; the sequence is LIEVERKFLP…AKLIVYLQRF (197 aa). Glutamate 7 and glutamate 9 together coordinate Mg(2+). The substrate site is built by lysine 11, arginine 55, arginine 57, lysine 65, and arginine 125. Positions 145, 157, and 159 each coordinate Mg(2+). Substrate is bound at residue glutamate 157. Lysine 193 lines the substrate pocket.

It belongs to the ThTPase family. Monomer. The cofactor is Mg(2+).

It localises to the cytoplasm. The enzyme catalyses thiamine triphosphate + H2O = thiamine diphosphate + phosphate + H(+). Functionally, hydrolase highly specific for thiamine triphosphate (ThTP). This Macaca fascicularis (Crab-eating macaque) protein is Thiamine-triphosphatase (THTPA).